Here is a 558-residue protein sequence, read N- to C-terminus: Phosphatidylserine lipase ABHD16A (558 aa).

2 helical membrane-spanning segments follow: residues 60–80 (ILAL…FAFF) and 93–113 (VVPF…VACL). Residues 114–558 (RGIGRWTNPQ…AQNFQMPWHL (445 aa)) are Cytoplasmic-facing. The region spanning 281–407 (LVICCEGNAG…LVTRTVRQHL (127 aa)) is the AB hydrolase-1 domain. Catalysis depends on charge relay system residues Ser-355, Asp-430, and His-507.

It belongs to the AB hydrolase superfamily. ABHD16 family.

It is found in the membrane. It catalyses the reaction 1-heptadecanoyl-2-(5Z,8Z,11Z,14Z-eicosatetraenoyl)-sn-glycero-3-phosphoserine + H2O = 1-heptadecanoyl-sn-glycero-3-phosphoserine + (5Z,8Z,11Z,14Z)-eicosatetraenoate + H(+). The catalysed reaction is 1-hexadecanoyl-2-(9Z-octadecenoyl)-sn-glycero-3-phospho-L-serine + H2O = 1-hexadecanoyl-sn-glycero-3-phospho-L-serine + (9Z)-octadecenoate + H(+). The enzyme catalyses 1-octadecanoyl-2-(9Z,12Z-octadecadienoyl)-sn-glycero-3-phosphoserine + H2O = 1-octadecanoyl-sn-glycero-3-phosphoserine + (9Z,12Z)-octadecadienoate + H(+). It carries out the reaction 1-heptadecanoyl-2-(5Z,8Z,11Z,14Z-eicosatetraenoyl)-sn-glycero-3-phosphocholine + H2O = 1-heptadecanoyl-sn-glycero-3-phosphocholine + (5Z,8Z,11Z,14Z)-eicosatetraenoate + H(+). It catalyses the reaction 1-hexadecanoyl-2-(9Z-octadecenoyl)-sn-glycero-3-phosphoglycerol + H2O = 1-hexadecanoyl-sn-glycero-3-phosphoglycerol + (9Z)-octadecenoate + H(+). The catalysed reaction is 1-hexadecanoyl-2-(9Z-octadecenoyl)-sn-glycero-3-phospho-(1D-myo-inositol) + H2O = 1-hexadecanoyl-sn-glycero-3-phospho-(1D-myo-inositol) + (9Z)-octadecenoate + H(+). The enzyme catalyses 1-heptadecanoyl-2-(5Z,8Z,11Z,14Z-eicosatetraenoyl)-sn-glycero-3-phosphoethanolamine + H2O = 1-heptadecanoyl-sn-glycero-3-phosphoethanolamine + (5Z,8Z,11Z,14Z)-eicosatetraenoate + H(+). It carries out the reaction 1-hexadecanoyl-2-(9Z-octadecenoyl)-sn-glycero-3-phospho-(1'-sn-glycerol) + H2O = 1-hexadecanoyl-sn-glycero-3-phospho-(1'-sn-glycerol) + (9Z)-octadecenoate + H(+). It catalyses the reaction Hydrolyzes glycerol monoesters of long-chain fatty acids.. The catalysed reaction is 1-tetradecanoylglycerol + H2O = tetradecanoate + glycerol + H(+). The enzyme catalyses 2-hexadecanoylglycerol + H2O = glycerol + hexadecanoate + H(+). It carries out the reaction 1-(9Z-octadecenoyl)-glycerol + H2O = glycerol + (9Z)-octadecenoate + H(+). It catalyses the reaction 2-(9Z-octadecenoyl)-glycerol + H2O = glycerol + (9Z)-octadecenoate + H(+). The catalysed reaction is 2-(9Z,12Z-octadecadienoyl)-glycerol + H2O = (9Z,12Z)-octadecadienoate + glycerol + H(+). The enzyme catalyses 1-(5Z,8Z,11Z,14Z-eicosatetraenoyl)-glycerol + H2O = glycerol + (5Z,8Z,11Z,14Z)-eicosatetraenoate + H(+). It carries out the reaction 2-(5Z,8Z,11Z,14Z-eicosatetraenoyl)-glycerol + H2O = glycerol + (5Z,8Z,11Z,14Z)-eicosatetraenoate + H(+). It catalyses the reaction prostaglandin D2-1-glycerol ester + H2O = prostaglandin D2 + glycerol + H(+). The catalysed reaction is 2-glyceryl-15-deoxy-Delta(12,14)-prostaglandin J2 + H2O = 15-deoxy-Delta(12,14)-prostaglandin J2 + glycerol + H(+). The enzyme catalyses 1-(9Z,12Z-octadecadienoyl)-glycerol + H2O = (9Z,12Z)-octadecadienoate + glycerol + H(+). In terms of biological role, phosphatidylserine (PS) lipase that mediates the hydrolysis of phosphatidylserine to generate lysophosphatidylserine (LPS). LPS constitutes a class of signaling lipids that regulates immunological and neurological processes. Has no activity towards diacylglycerol, triacylglycerol or lysophosphatidylserine lipase. Also has monoacylglycerol lipase activity, with preference for 1-(9Z,12Z-octadecadienoyl)-glycerol (1-LG) and 2-glyceryl-15-deoxy-Delta(12,14)-prostaglandin J2 (15d-PGJ(2)-G). This chain is Phosphatidylserine lipase ABHD16A, found in Pongo abelii (Sumatran orangutan).